Reading from the N-terminus, the 312-residue chain is MRLLLALLVLAAAPPQARAASHWCYQIQVKPSNYTCLEPDEWEGSCQNNRQSPVNIVTAKTQLDPNLGRFSFSGYNMKHQWVVQNNGHTVMVLLENKPSIAGGGLSTRYQATQLHLHWSRAMDRGSEHSFDGERFAMEMHIVHEKEKGLSGNASQNQFAEDEIAVLAFMVEDGSKNVNFQPLVEALSDIPRPNMNTTMKEGVSLFDLLPEEESLRHYFRYLGSLTTPTCDEKVVWTVFQKPIQLHRDQILAFSQKLFYDDQQKVNMTDNVRPVQSLGQRQVFRSGAPGLLLAQPLPTLLAPVLACLTVGFLR.

Positions 1–18 (MRLLLALLVLAAAPPQAR) are cleaved as a signal peptide. The Alpha-carbonic anhydrase domain maps to 21–285 (SHWCYQIQVK…LGQRQVFRSG (265 aa)). Disulfide bonds link Cys-24/Cys-36 and Cys-46/Cys-229. Residue Asn-33 is glycosylated (N-linked (GlcNAc...) asparagine). His-88 acts as the Proton donor/acceptor in catalysis. Zn(2+)-binding residues include His-115, His-117, and His-140. N-linked (GlcNAc...) asparagine glycans are attached at residues Asn-152 and Asn-195. 225–226 (TT) lines the substrate pocket. Residue Asn-265 is glycosylated (N-linked (GlcNAc...) asparagine). A lipid anchor (GPI-anchor amidated serine) is attached at Ser-284. A propeptide spans 285–312 (GAPGLLLAQPLPTLLAPVLACLTVGFLR) (removed in mature form).

This sequence belongs to the alpha-carbonic anhydrase family. As to quaternary structure, interacts with SLC4A4. Requires Zn(2+) as cofactor.

The protein localises to the cell membrane. The catalysed reaction is hydrogencarbonate + H(+) = CO2 + H2O. Its activity is regulated as follows. Inhibited by acetazolamide. Catalyzes the reversible hydration of carbon dioxide into bicarbonate and protons and thus is essential to maintaining intracellular and extracellular pH. May stimulate the sodium/bicarbonate transporter activity of SLC4A4 that acts in pH homeostasis. It is essential for acid overload removal from the retina and retina epithelium, and acid release in the choriocapillaris in the choroid. The polypeptide is Carbonic anhydrase 4 (CA4) (Bos taurus (Bovine)).